A 716-amino-acid polypeptide reads, in one-letter code: 1,4-alpha-glucan branching enzyme GlgB (716 aa).

Catalysis depends on Asp-399, which acts as the Nucleophile. Residue Glu-452 is the Proton donor of the active site.

This sequence belongs to the glycosyl hydrolase 13 family. GlgB subfamily. Monomer.

It catalyses the reaction Transfers a segment of a (1-&gt;4)-alpha-D-glucan chain to a primary hydroxy group in a similar glucan chain.. Its pathway is glycan biosynthesis; glycogen biosynthesis. In terms of biological role, catalyzes the formation of the alpha-1,6-glucosidic linkages in glycogen by scission of a 1,4-alpha-linked oligosaccharide from growing alpha-1,4-glucan chains and the subsequent attachment of the oligosaccharide to the alpha-1,6 position. This is 1,4-alpha-glucan branching enzyme GlgB from Rhodopseudomonas palustris (strain BisB5).